The following is a 238-amino-acid chain: Isoprene-epoxide--glutathione S-transferase (238 aa).

The region spanning tyrosine 7–leucine 82 is the GST N-terminal domain. Residues aspartate 118–isoleucine 238 form the GST C-terminal domain.

Belongs to the GST superfamily. Homodimer.

The catalysed reaction is 2-glutathionyl-2-methylbut-3-en-1-ol = (3R)-3,4-epoxy-3-methylbut-1-ene + glutathione. Activity is inhibited by 1,2-epoxyhexane. Functionally, involved in isoprene degradation. Catalyzes the glutathione-dependent ring opening of various epoxides. The highest conversion rate is observed with the physiological substrate, 3,4-epoxy-3-methyl-1-butene, which is the primary oxidation product of isoprene. It can also use other epoxides, including epoxyethane, epoxypropane, epithiopropane, epichlorohydrin, epifluorohydrin, epibromohydrin, 1,2-epoxybutane, 1,2-epoxyhexane, cis-2,3-epoxybutane, cis-1,2-dichloroepoxyethane and trans-1,2-dichloroepoxyethane. The protein is Isoprene-epoxide--glutathione S-transferase of Rhodococcus sp. (strain AD45).